We begin with the raw amino-acid sequence, 259 residues long: GTP cyclohydrolase FolE2 (259 aa).

Belongs to the GTP cyclohydrolase IV family.

It carries out the reaction GTP + H2O = 7,8-dihydroneopterin 3'-triphosphate + formate + H(+). It participates in cofactor biosynthesis; 7,8-dihydroneopterin triphosphate biosynthesis; 7,8-dihydroneopterin triphosphate from GTP: step 1/1. In terms of biological role, converts GTP to 7,8-dihydroneopterin triphosphate. The chain is GTP cyclohydrolase FolE2 from Halorhodospira halophila (strain DSM 244 / SL1) (Ectothiorhodospira halophila (strain DSM 244 / SL1)).